The sequence spans 81 residues: MAGNTGERPFVDIITSVRYWVIHALTIPALFLAGWLFVSTGLAYDIFGTPRPNEYFTAERQELPIVSDRFNALEQLEKLTR.

The helical transmembrane segment at 21–35 (VIHALTIPALFLAGW) threads the bilayer. Histidine 23 provides a ligand contact to heme.

It belongs to the PsbE/PsbF family. As to quaternary structure, heterodimer of an alpha subunit and a beta subunit. PSII is composed of 1 copy each of membrane proteins PsbA, PsbB, PsbC, PsbD, PsbE, PsbF, PsbH, PsbI, PsbJ, PsbK, PsbL, PsbM, PsbT, PsbX, PsbY, PsbZ, Psb30/Ycf12, peripheral proteins PsbO, CyanoQ (PsbQ), PsbU, PsbV and a large number of cofactors. It forms dimeric complexes. Requires heme b as cofactor.

It localises to the cellular thylakoid membrane. This b-type cytochrome is tightly associated with the reaction center of photosystem II (PSII). PSII is a light-driven water:plastoquinone oxidoreductase that uses light energy to abstract electrons from H(2)O, generating O(2) and a proton gradient subsequently used for ATP formation. It consists of a core antenna complex that captures photons, and an electron transfer chain that converts photonic excitation into a charge separation. The polypeptide is Cytochrome b559 subunit alpha (Synechococcus sp. (strain JA-3-3Ab) (Cyanobacteria bacterium Yellowstone A-Prime)).